The chain runs to 1108 residues: cGMP-inhibited 3',5'-cyclic phosphodiesterase 3B (1108 aa).

Residues 1-11 (MRKDERERDTP) are compositionally biased toward basic and acidic residues. The segment at 1–32 (MRKDERERDTPAMRSPPPPPPPATATAASPPE) is disordered. The tract at residues 1–32 (MRKDERERDTPAMRSPPPPPPPATATAASPPE) is interaction with RAPGEF3. Residues 14–23 (RSPPPPPPPA) show a composition bias toward pro residues. Phosphoserine is present on Ser15. 6 helical membrane-spanning segments follow: residues 73–93 (AGARLSLAALAAFVLAALLGA), 114–134 (LSLSPLFSIACAFFFLTCFLT), 144–164 (AGSWWLLALPACCYLGDFAAW), 175–195 (AAAAAGRLCLVLSCVGLLTLA), 204–224 (VLVLLFAGLVWWVSFSGLGAL), and 231–251 (LLSCLVGGAGCLLALGLDHFF). A Phosphoserine; by PKB/AKT1 or PKB/AKT2 modification is found at Ser279. Phosphoserine occurs at positions 280 and 427. Positions 405–448 (DRKLHKGLSSKPSFPTAQLRRSSGASGLLTSEHHSRWDRSGGKR) are disordered. A compositionally biased stretch (polar residues) spans 414 to 433 (SKPSFPTAQLRRSSGASGLL). The interaction with PIK3R6 stretch occupies residues 421 to 445 (AQLRRSSGASGLLTSEHHSRWDRSG). Basic and acidic residues predominate over residues 435–445 (SEHHSRWDRSG). The region spanning 633–1070 (PNIDQEVLLD…KIWKEIIEEE (438 aa)) is the PDEase domain. The active-site Proton donor is His719. His719 contacts AMP. Mg(2+) is bound by residues His723, His803, Asp804, and Asp919. Asp804, Asp919, and Gln970 together coordinate AMP. The segment covering 999–1033 (EEGDDTESDDDDDDDDDDDDDDDEELDSDDEETED) has biased composition (acidic residues). Residues 999-1042 (EEGDDTESDDDDDDDDDDDDDDDEELDSDDEETEDNLNPKPQRR) are disordered.

The protein belongs to the cyclic nucleotide phosphodiesterase family. PDE3 subfamily. In terms of assembly, homodimer. Interacts with PIK3CG; regulates PDE3B activity and thereby cAMP levels in cells. Interacts with RAPGEF3 and PIK3R6; form a signaling complex that regulates phosphatidylinositol 3-kinase gamma in angiogenesis. Interacts with ABHD15; this interaction regulates PDE3B's stability and expression and, thereby, impacts the antilipolytic action of insulin. Mg(2+) serves as cofactor. The cofactor is Mn(2+). In terms of processing, phosphorylation at Ser-279 mediates insulin-induced activation of PDE3B. In terms of tissue distribution, abundant in adipose tissues.

It is found in the membrane. The catalysed reaction is a nucleoside 3',5'-cyclic phosphate + H2O = a nucleoside 5'-phosphate + H(+). The enzyme catalyses 3',5'-cyclic AMP + H2O = AMP + H(+). It catalyses the reaction 3',5'-cyclic GMP + H2O = GMP + H(+). With respect to regulation, inhibited by cGMP. Cyclic nucleotide phosphodiesterase with a dual-specificity for the second messengers cAMP and cGMP, which are key regulators of many important physiological processes. Regulates angiogenesis by inhibiting the cAMP-dependent guanine nucleotide exchange factor RAPGEF3 and downstream phosphatidylinositol 3-kinase gamma-mediated signaling. Controls cardiac contractility by reducing cAMP concentration in cardiocytes. The sequence is that of cGMP-inhibited 3',5'-cyclic phosphodiesterase 3B from Rattus norvegicus (Rat).